The sequence spans 211 residues: Stromal cell-derived factor 2 (211 aa).

The signal sequence occupies residues 1 to 18 (MAVVPLLLLGGLWSAVGA). MIR domains are found at residues 21–75 (LGVV…IRGK), 83–138 (GTPI…VLCN), and 139–193 (GPYW…AMEG).

It is found in the secreted. The chain is Stromal cell-derived factor 2 (SDF2) from Homo sapiens (Human).